The chain runs to 295 residues: uncharacterized protein (295 aa).

This is an uncharacterized protein from Methanocaldococcus jannaschii (strain ATCC 43067 / DSM 2661 / JAL-1 / JCM 10045 / NBRC 100440) (Methanococcus jannaschii).